The primary structure comprises 407 residues: uncharacterized protein (407 aa).

Disordered regions lie at residues 73-93 and 116-202; these read SPHSVISKKPSGRGRDKVHGG and SGSI…IKPS. A run of 5 repeats spans residues 112–116, 117–121, 122–126, 127–131, and 132–136. A 5 X 5 AA tandem repeats of G-[S]-[IV]-R-[DNS] region spans residues 112 to 136; sequence GSIRSGSIRSGSIRNGSIRSGSVRD. Residues 116-132 are compositionally biased toward low complexity; it reads SGSIRSGSIRNGSIRSG. Residues 187–202 show a composition bias toward basic and acidic residues; that stretch reads NHYAESEYSEKSIKPS.

It belongs to the asfivirus B407L family.

This is an uncharacterized protein from Ornithodoros (relapsing fever ticks).